We begin with the raw amino-acid sequence, 1581 residues long: Ankyrin repeat domain-containing protein 26 (1581 aa).

The segment at 1–22 is disordered; that stretch reads MKKIFGFRSKGPSPLGPSARPR. Ser13 carries the post-translational modification Phosphoserine. ANK repeat units follow at residues 46–76, 80–109, 113–142, 146–175, and 179–208; these read KDMG…GVND, KDRT…EIDA, ESST…DPNV, SGNT…NIEA, and DDLT…SIHA. 4 disordered regions span residues 225 to 270, 299 to 343, 361 to 381, and 488 to 652; these read RLQR…FDNK, LDNG…PVEG, SASQ…WHKS, and VLNK…QTAA. Positions 229 to 250 are enriched in polar residues; that stretch reads SENSNPVDNGSEDGSLTRSYNT. Ser239 and Ser260 each carry phosphoserine. Over residues 308-319 the composition is skewed to acidic residues; it reads SDSPSESEDAIE. Residues 327–337 show a composition bias toward polar residues; it reads RVQTLSPSRQS. Residues 367–381 show a composition bias toward basic and acidic residues; it reads PNHDNLTRADGWHKS. The span at 491–504 shows a compositional bias: polar residues; that stretch reads KTETVGMTDAQTFK. Basic and acidic residues-rich tracts occupy residues 505–516, 524–538, and 585–601; these read SEPESVSREEQT, SQQK…KNNE, and KEAK…REPA. Residue Ser511 is modified to Phosphoserine. Coiled coils occupy residues 715 to 845, 876 to 1345, 1396 to 1470, and 1521 to 1550; these read RSHC…NARM, HEKE…MVEH, RSQM…RSLL, and LTKM…FCRV.

As to quaternary structure, interacts with TRIO. Interacts with GPS2. Interacts with CCDC85B. Interacts with HMMR. In terms of tissue distribution, widely expressed. Expressed in the arcuate and ventromedial nuclei within the hypothalamus and in the ependyma and the circumventricular organs (at protein level).

It localises to the cytoplasm. The protein localises to the cytosol. Acts as a regulator of adipogenesis. Involved in the regulation of the feeding behavior. The sequence is that of Ankyrin repeat domain-containing protein 26 (Ankrd26) from Mus musculus (Mouse).